Reading from the N-terminus, the 715-residue chain is Elongation factor G (715 aa).

The 283-residue stretch at 8 to 290 folds into the tr-type G domain; the sequence is NRYRNIGICA…AVIDFLPAPT (283 aa). GTP contacts are provided by residues 17-24, 88-92, and 142-145; these read AHVDAGKT, DTPGH, and NKMD.

It belongs to the TRAFAC class translation factor GTPase superfamily. Classic translation factor GTPase family. EF-G/EF-2 subfamily.

Its subcellular location is the cytoplasm. Functionally, catalyzes the GTP-dependent ribosomal translocation step during translation elongation. During this step, the ribosome changes from the pre-translocational (PRE) to the post-translocational (POST) state as the newly formed A-site-bound peptidyl-tRNA and P-site-bound deacylated tRNA move to the P and E sites, respectively. Catalyzes the coordinated movement of the two tRNA molecules, the mRNA and conformational changes in the ribosome. The sequence is that of Elongation factor G from Pseudomonas fluorescens (strain ATCC BAA-477 / NRRL B-23932 / Pf-5).